We begin with the raw amino-acid sequence, 713 residues long: MLPLWLVLAGLLLAVGPAASHRGEMEPDSLASGDDDEDSDGDGPHGDRSEEPVYMHRAPYWTHPHRMDKKLYAVPAGNTVKFRCPASGSPSPSIRWFKNGREFRGEHRIGGIRLRHQHWSLVMESVVPSDRGNYTCLVENRFGRIRYSYLLDVLERSPHRPILQAGLPANTTALVGSDVEFFCKVYSDAQPHLQWLKHIEVNGSSYGPDGVPYVQVLKTADINSSEVEVLYLRNVTMEDAGEYTCLAGNSIGLSYQSAWLTVLPEEELVHEAETSEAKYTDIIIYTSGSLAVAMALIIVVLCRMQTQSSKQPLEPMAVHKLSKFPLIRQFSLDSSSSGKSSTSLMRVTRLSSSCAPMLAGVVEMDLPLDSKWEFPREKLVLGKPLGEGCFGQVVRAEAYGIDRQWPDRAVTVAVKMLKDNATDKDLADLISEMEMMKLMDKHKNIINLLGVCTQDGPLYVIVEFAAKGNLREYLRARRPPTPDYTFDITELHEEQLCFKDLVSCVYQVARGMEYLESRRCIHRDLAARNVLVTAENVMKIADFGLARDVHDIDYYKKTSNGRLPVKWMAPEALFDRVYTHQSDVWSFGILMWEIFTLGGSPYPGIPVEELFKLLKEGHRMDCPSNCTHELYMLMRECWHAVPLQRPTFKQLVEGLDKILAAISEEYLDLSMPFEQYSPSCEDTTSTCSSDDSVFTHDPMPLAPCLFSCPSGRT.

An N-terminal signal peptide occupies residues 1 to 20 (MLPLWLVLAGLLLAVGPAAS). The interval 21–54 (HRGEMEPDSLASGDDDEDSDGDGPHGDRSEEPVY) is disordered. The Extracellular portion of the chain corresponds to 21–281 (HRGEMEPDSL…AETSEAKYTD (261 aa)). The span at 42-54 (DGPHGDRSEEPVY) shows a compositional bias: basic and acidic residues. Ig-like C2-type domains lie at 59–152 (PYWT…YLLD) and 161–261 (PILQ…AWLT). A disulfide bridge connects residues Cys84 and Cys136. N-linked (GlcNAc...) asparagine glycans are attached at residues Asn133, Asn170, Asn202, Asn223, and Asn234. Cys183 and Cys245 are disulfide-bonded. Residues 282–302 (IIIYTSGSLAVAMALIIVVLC) form a helical membrane-spanning segment. Residues 303–713 (RMQTQSSKQP…CLFSCPSGRT (411 aa)) are Cytoplasmic-facing. The region spanning 379–667 (LVLGKPLGEG…ILAAISEEYL (289 aa)) is the Protein kinase domain. Residues 385 to 393 (LGEGCFGQV) and Lys415 each bind ATP. Asp524 serves as the catalytic Proton acceptor. Tyr554, Tyr555, and Tyr666 each carry phosphotyrosine; by autocatalysis.

It belongs to the protein kinase superfamily. Tyr protein kinase family. Fibroblast growth factor receptor subfamily. As to quaternary structure, monomer. Homodimer after ligand binding. Interacts with FGF1, FGF2, FGF4, FGF6, FGF8, FGF9, FGF16, FGF17, FGF18, FGF19, FGF21 and FGF23 (in vitro). Binding affinity for FGF family members is enhanced by interactions between FGFs and heparan sulfate proteoglycans. Interacts with KLB; this strongly increases the affinity for FGF19 and FGF23. Affinity for FGF19 is strongly increased by KLB and sulfated glycosaminoglycans. KLB and KL both interact with the core-glycosylated FGFR4 in the endoplasmic reticulum and promote its degradation, so that only FGFR4 with fully mature N-glycans is expressed at the cell surface. Identified in a complex with NCAM1, CDH2, PLCG1, FRS2, SRC, SHC1, GAP43 and CTTN. Interacts with MMP14 and HIP1. Interacts with STAT3. N-glycosylated. Full maturation of the glycan chains in the Golgi is essential for high affinity interaction with FGF19. Post-translationally, ubiquitinated. Subject to proteasomal degradation when not fully glycosylated. In terms of processing, autophosphorylated. Binding of FGF family members together with heparan sulfate proteoglycan or heparin promotes receptor dimerization and autophosphorylation on tyrosine residues. Autophosphorylation occurs in trans between the two FGFR molecules present in the dimer.

The protein localises to the cell membrane. Its subcellular location is the endosome. The protein resides in the endoplasmic reticulum. It catalyses the reaction L-tyrosyl-[protein] + ATP = O-phospho-L-tyrosyl-[protein] + ADP + H(+). Present in an inactive conformation in the absence of bound ligand. Ligand binding leads to dimerization and activation by autophosphorylation on tyrosine residues. Tyrosine-protein kinase that acts as a cell-surface receptor for fibroblast growth factors and plays a role in the regulation of cell proliferation, differentiation and migration, and in regulation of lipid metabolism, bile acid biosynthesis, glucose uptake, vitamin D metabolism and phosphate homeostasis. Required for normal down-regulation of the expression of CYP7A1, the rate-limiting enzyme in bile acid synthesis, in response to FGF19. Phosphorylates PLCG1 and FRS2. Ligand binding leads to the activation of several signaling cascades. Activation of PLCG1 leads to the production of the cellular signaling molecules diacylglycerol and inositol 1,4,5-trisphosphate. Phosphorylation of FRS2 triggers recruitment of GRB2, GAB1, PIK3R1 and SOS1, and mediates activation of RAS, MAPK1/ERK2, MAPK3/ERK1 and the MAP kinase signaling pathway, as well as of the AKT1 signaling pathway. Promotes SRC-dependent phosphorylation of the matrix protease MMP14 and its lysosomal degradation. FGFR4 signaling is down-regulated by receptor internalization and degradation; MMP14 promotes internalization and degradation of FGFR4. This Coturnix coturnix (Common quail) protein is Fibroblast growth factor receptor 4 (FGFR4).